The primary structure comprises 483 residues: UDP-N-acetylmuramate--L-alanine ligase (483 aa).

125–131 (GTHGKTT) is a binding site for ATP.

The protein belongs to the MurCDEF family.

It is found in the cytoplasm. It catalyses the reaction UDP-N-acetyl-alpha-D-muramate + L-alanine + ATP = UDP-N-acetyl-alpha-D-muramoyl-L-alanine + ADP + phosphate + H(+). Its pathway is cell wall biogenesis; peptidoglycan biosynthesis. Functionally, cell wall formation. In Pseudoalteromonas translucida (strain TAC 125), this protein is UDP-N-acetylmuramate--L-alanine ligase.